Here is a 345-residue protein sequence, read N- to C-terminus: MFIDSVKITLASGDGGKGAVSFRREKHVPLGGPDGGDGGNGGDIIFVCDNNTHTLVNFKGKRELRAQNGAGGMGRNKNGKKGENLELIVPEGTQVIDAQTNEILLDLTKEGQRELFLKGGKGGLGNTHFKHATNQRPDYAQPGIKGESRLVRLELKLIADVGLVGFPNVGKSTLISVVSNAKPEIANYEFTTLTPKLGLVDVDEYNSFVMADIPGIIEGASGGKGLGLAFLKHIERTSFLLFVLDPMRQMPLKEQFIVLRKELEKFSNELFGRKFGIMISKSDSVNLGEEFAEQITLNINELENYLKEINNPQSFLIKVSSLEKTGLKELKFMLLEEIKTLRNNK.

The 158-residue stretch at 1–158 (MFIDSVKITL…RLVRLELKLI (158 aa)) folds into the Obg domain. The OBG-type G domain maps to 159-339 (ADVGLVGFPN…LKFMLLEEIK (181 aa)). Residues 165 to 172 (GFPNVGKS), 190 to 194 (FTTLT), 212 to 215 (DIPG), 280 to 283 (SKSD), and 320 to 322 (SSL) each bind GTP. Mg(2+) is bound by residues Ser172 and Thr192.

The protein belongs to the TRAFAC class OBG-HflX-like GTPase superfamily. OBG GTPase family. Monomer. Mg(2+) is required as a cofactor.

Its subcellular location is the cytoplasm. Functionally, an essential GTPase which binds GTP, GDP and possibly (p)ppGpp with moderate affinity, with high nucleotide exchange rates and a fairly low GTP hydrolysis rate. Plays a role in control of the cell cycle, stress response, ribosome biogenesis and in those bacteria that undergo differentiation, in morphogenesis control. The protein is GTPase Obg of Campylobacter jejuni subsp. jejuni serotype O:6 (strain 81116 / NCTC 11828).